Here is a 236-residue protein sequence, read N- to C-terminus: Uridylate kinase (236 aa).

Residue 12–15 (KLSG) coordinates ATP. Residues 20 to 25 (GEKGFG) form an involved in allosteric activation by GTP region. G54 contacts UMP. G55 and R59 together coordinate ATP. UMP is bound by residues D72 and 133–140 (TGNPYFST). 3 residues coordinate ATP: N161, Y166, and D169.

It belongs to the UMP kinase family. As to quaternary structure, homohexamer.

Its subcellular location is the cytoplasm. It carries out the reaction UMP + ATP = UDP + ADP. The protein operates within pyrimidine metabolism; CTP biosynthesis via de novo pathway; UDP from UMP (UMPK route): step 1/1. With respect to regulation, allosterically activated by GTP. Inhibited by UTP. Catalyzes the reversible phosphorylation of UMP to UDP. This is Uridylate kinase from Alkaliphilus oremlandii (strain OhILAs) (Clostridium oremlandii (strain OhILAs)).